The sequence spans 361 residues: tRNA-specific 2-thiouridylase MnmA (361 aa).

ATP is bound by residues 8–15 (AMSGGVDS) and methionine 34. Cysteine 104 acts as the Nucleophile in catalysis. A disulfide bridge connects residues cysteine 104 and cysteine 202. Glycine 128 lines the ATP pocket. Positions 152–154 (KDQ) are interaction with tRNA. Cysteine 202 serves as the catalytic Cysteine persulfide intermediate. Positions 307 to 308 (RY) are interaction with tRNA.

Belongs to the MnmA/TRMU family.

Its subcellular location is the cytoplasm. It catalyses the reaction S-sulfanyl-L-cysteinyl-[protein] + uridine(34) in tRNA + AH2 + ATP = 2-thiouridine(34) in tRNA + L-cysteinyl-[protein] + A + AMP + diphosphate + H(+). Its function is as follows. Catalyzes the 2-thiolation of uridine at the wobble position (U34) of tRNA, leading to the formation of s(2)U34. This Caldicellulosiruptor saccharolyticus (strain ATCC 43494 / DSM 8903 / Tp8T 6331) protein is tRNA-specific 2-thiouridylase MnmA.